The primary structure comprises 263 residues: Microtubule-associated protein RP/EB family member 1 (263 aa).

The 103-residue stretch at 14–116 folds into the Calponin-homology (CH) domain; sequence NLSRHDMLAW…FVQWFKKFFD (103 aa). Residues 180-250 form the EB1 C-terminal domain; sequence KKAAGDDESA…LYATDEGFVI (71 aa).

This sequence belongs to the MAPRE family.

It is found in the cytoplasm. The protein resides in the cytoskeleton. The protein localises to the microtubule organizing center. Its subcellular location is the centrosome. It localises to the golgi apparatus. It is found in the spindle. The protein resides in the spindle pole. Its function is as follows. Plus-end tracking protein (+TIP) that binds to the plus-end of microtubules and regulates the dynamics of the microtubule cytoskeleton. Promotes cytoplasmic microtubule nucleation and elongation. Involved in mitotic spindle positioning by stabilizing microtubules and promoting dynamic connection between astral microtubules and the cortex during mitotic chromosome segregation. The sequence is that of Microtubule-associated protein RP/EB family member 1 (MAPRE1) from Coturnix coturnix (Common quail).